The following is a 423-amino-acid chain: MLTSRPRGTEDILPEEVGRWYLLENTAREVSRLYGYREIRTPIFEHTELFNRGVGDTSDIVEKEMYTFIDRGDRSLTLRPEGTAPVVRAFVEHSLEARGLPVKLFYLGPMFRYGRPQAGRLRQFHQFGVEAFGSRDPALDAEVIALAMDFYTRLGLKDLELHLNSVGCPACRPAHREKLKAYLRPRLEELCPTCQGRFERNPLRIFDCKSPACQEIVREAPTVTASLCPDCAGHFHRVQEYLKALGIEFILDEHLVRGLDYYTKTAFEIMVKGIGAQSSIGGGGRYDGLVAALGGKQVPGIGFGLGLERVLLALEIQGQEPPPEGGVDVLVVTAGTGVDLAAFRLLAGLRAAGIRADKDYLERSLKGQMKYANRYPARMAVILGEEELARGRVSVRRLDAGSQEEVPLAAVVDYCRKMKESGW.

This sequence belongs to the class-II aminoacyl-tRNA synthetase family. Homodimer.

The protein localises to the cytoplasm. It carries out the reaction tRNA(His) + L-histidine + ATP = L-histidyl-tRNA(His) + AMP + diphosphate + H(+). The protein is Histidine--tRNA ligase of Moorella thermoacetica (strain ATCC 39073 / JCM 9320).